The sequence spans 637 residues: Phosphomethylpyrimidine synthase (637 aa).

Substrate is bound by residues Asn-242, Met-271, Tyr-300, His-336, 356-358, 397-400, and Glu-436; these read SRG and DGLR. Position 440 (His-440) interacts with Zn(2+). Position 463 (Tyr-463) interacts with substrate. Residue His-504 coordinates Zn(2+). 3 residues coordinate [4Fe-4S] cluster: Cys-584, Cys-587, and Cys-592.

It belongs to the ThiC family. Homodimer. [4Fe-4S] cluster serves as cofactor.

The catalysed reaction is 5-amino-1-(5-phospho-beta-D-ribosyl)imidazole + S-adenosyl-L-methionine = 4-amino-2-methyl-5-(phosphooxymethyl)pyrimidine + CO + 5'-deoxyadenosine + formate + L-methionine + 3 H(+). It functions in the pathway cofactor biosynthesis; thiamine diphosphate biosynthesis. In terms of biological role, catalyzes the synthesis of the hydroxymethylpyrimidine phosphate (HMP-P) moiety of thiamine from aminoimidazole ribotide (AIR) in a radical S-adenosyl-L-methionine (SAM)-dependent reaction. This is Phosphomethylpyrimidine synthase from Bordetella pertussis (strain Tohama I / ATCC BAA-589 / NCTC 13251).